A 194-amino-acid chain; its full sequence is MSMYKHVKEAWKKPSESYVKGLQWARMQDWRKEPTVVRVEKPTRIDRARSLGYKAKQGVIVARVAVRRGGLRKPRPKHSKKPATMAMNKITMSKSIQRIAEERAAKRYPNLEVLNSYSVGEDGKRKWYEVILIDVNHPSIKNDSSYKNLCTGKHTNRVFRGLTSAGKKGRGLMNKGKGAEKVRPGIRANKKLGK.

Positions 165–194 are disordered; that stretch reads AGKKGRGLMNKGKGAEKVRPGIRANKKLGK.

This sequence belongs to the eukaryotic ribosomal protein eL15 family.

This is Large ribosomal subunit protein eL15 from Methanococcus aeolicus (strain ATCC BAA-1280 / DSM 17508 / OCM 812 / Nankai-3).